Here is a 261-residue protein sequence, read N- to C-terminus: Carnitinyl-CoA dehydratase (261 aa).

Glu-111 acts as the Nucleophile in catalysis. Residue Glu-131 is the Proton acceptor of the active site.

The protein belongs to the enoyl-CoA hydratase/isomerase family.

It catalyses the reaction (R)-carnitinyl-CoA = crotonobetainyl-CoA + H2O. It functions in the pathway amine and polyamine metabolism; carnitine metabolism. Its function is as follows. Catalyzes the reversible dehydration of L-carnitinyl-CoA to crotonobetainyl-CoA. The chain is Carnitinyl-CoA dehydratase from Citrobacter koseri (strain ATCC BAA-895 / CDC 4225-83 / SGSC4696).